The chain runs to 602 residues: Zinc finger protein 652-B (602 aa).

Residues 60-232 (FQDSKPTNEV…PSDKAKSEEK (173 aa)) are disordered. Basic and acidic residues predominate over residues 65-79 (PTNEVHAVKGERENS). Composition is skewed to acidic residues over residues 80-108 (GESE…DEDE) and 148-167 (DDEG…DEEN). The span at 222–232 (SPSDKAKSEEK) shows a compositional bias: basic and acidic residues. A C2H2-type 1 zinc finger spans residues 235–258 (LTCDKCPRVFNTRWYLEKHMNVTH). Residues 262–284 (QICDKCGKKFVLESELSLHLQTD) form a C2H2-type 2; degenerate zinc finger. 6 consecutive C2H2-type zinc fingers follow at residues 289 to 312 (IQCI…KIVH), 319 to 341 (FSCE…LVAH), 347 to 369 (FTCE…SLQH), 375 to 397 (FRCE…MSIH), 403 to 425 (FMCQ…MKTH), and 431 to 453 (FICE…RRTH). The C2H2-type 9; degenerate zinc finger occupies 459–482 (YPCDVCGMRFRFSNMLKAHKEKCF). The interval 543–575 (PFSHLHLHPHSHTHHLAVPPVPHLPPPPALFKS) is disordered. A compositionally biased stretch (basic residues) spans 545-557 (SHLHLHPHSHTHH). The segment covering 561-571 (PPVPHLPPPPA) has biased composition (pro residues).

Belongs to the krueppel C2H2-type zinc-finger protein family.

Its subcellular location is the nucleus. In terms of biological role, may be involved in transcriptional regulation. This is Zinc finger protein 652-B (znf652-b) from Xenopus laevis (African clawed frog).